A 299-amino-acid polypeptide reads, in one-letter code: CCR4-NOT transcription complex subunit 9 (299 aa).

This sequence belongs to the CNOT9 family. Homodimer. Component of the CCR4-NOT complex.

Its subcellular location is the nucleus. The protein localises to the cytoplasm. It is found in the P-body. In terms of biological role, component of the CCR4-NOT complex which is one of the major cellular mRNA deadenylases and is linked to various cellular processes including bulk mRNA degradation, miRNA-mediated repression, translational repression during translational initiation and general transcription regulation. Additional complex functions may be a consequence of its influence on mRNA expression. Involved in down-regulation of MYB- and JUN-dependent transcription. Enhances ligand-dependent transcriptional activity of nuclear hormone receptors. May play a role in cell differentiation. In Xenopus tropicalis (Western clawed frog), this protein is CCR4-NOT transcription complex subunit 9.